Consider the following 256-residue polypeptide: Undecaprenyl-diphosphatase 2 (256 aa).

The next 8 helical transmembrane spans lie at 1–21, 38–58, 70–90, 97–117, 134–154, 175–195, 208–228, and 236–256; these read MDIF…FLPI, ATAT…LAVL, LNLW…AFIF, LFNV…FLLL, VTYK…IPGT, AEFS…YDLL, ALAV…KLFI, and FVSF…IAYV.

It belongs to the UppP family.

It is found in the cell inner membrane. It carries out the reaction di-trans,octa-cis-undecaprenyl diphosphate + H2O = di-trans,octa-cis-undecaprenyl phosphate + phosphate + H(+). Its function is as follows. Catalyzes the dephosphorylation of undecaprenyl diphosphate (UPP). Confers resistance to bacitracin. The protein is Undecaprenyl-diphosphatase 2 of Pseudoalteromonas translucida (strain TAC 125).